The following is a 156-amino-acid chain: Sperm acrosome-associated protein 5 (156 aa).

The first 18 residues, 1–18, serve as a signal peptide directing secretion; the sequence is MQVSGTIVVILMAANVEA. Residues 19 to 147 enclose the C-type lysozyme domain; that stretch reads KIYERCDLAK…SEWLRGCHMN (129 aa). Intrachain disulfides connect Cys-24–Cys-144, Cys-48–Cys-132, Cys-82–Cys-97, and Cys-93–Cys-111. The active site involves Glu-53.

It belongs to the glycosyl hydrolase 22 family.

The protein resides in the secreted. It carries out the reaction Hydrolysis of (1-&gt;4)-beta-linkages between N-acetylmuramic acid and N-acetyl-D-glucosamine residues in a peptidoglycan and between N-acetyl-D-glucosamine residues in chitodextrins.. The protein is Sperm acrosome-associated protein 5 (SPACA5) of Bos taurus (Bovine).